The primary structure comprises 276 residues: NH(3)-dependent NAD(+) synthetase (276 aa).

An ATP-binding site is contributed by 43–50 (GISGGVDS). Asp49 is a binding site for Mg(2+). Arg146 is a deamido-NAD(+) binding site. Thr166 serves as a coordination point for ATP. Glu171 serves as a coordination point for Mg(2+). Deamido-NAD(+) contacts are provided by Lys179 and Asp186. Residues Lys195 and Thr217 each coordinate ATP. Position 266–267 (266–267 (HK)) interacts with deamido-NAD(+).

It belongs to the NAD synthetase family. As to quaternary structure, homodimer.

It catalyses the reaction deamido-NAD(+) + NH4(+) + ATP = AMP + diphosphate + NAD(+) + H(+). The protein operates within cofactor biosynthesis; NAD(+) biosynthesis; NAD(+) from deamido-NAD(+) (ammonia route): step 1/1. In terms of biological role, catalyzes the ATP-dependent amidation of deamido-NAD to form NAD. Uses ammonia as a nitrogen source. The polypeptide is NH(3)-dependent NAD(+) synthetase (Vibrio parahaemolyticus serotype O3:K6 (strain RIMD 2210633)).